The chain runs to 56 residues: Large ribosomal subunit protein bL32 (56 aa).

The segment covering 1 to 19 has biased composition (basic residues); the sequence is MAVPKRKKSRSTTRHRRAQ. The tract at residues 1–22 is disordered; the sequence is MAVPKRKKSRSTTRHRRAQWKT.

It belongs to the bacterial ribosomal protein bL32 family.

The polypeptide is Large ribosomal subunit protein bL32 (Cutibacterium acnes (strain DSM 16379 / KPA171202) (Propionibacterium acnes)).